Here is a 227-residue protein sequence, read N- to C-terminus: Cytidylate kinase (227 aa).

10–18 (GPASSGKST) serves as a coordination point for ATP.

The protein belongs to the cytidylate kinase family. Type 1 subfamily.

It localises to the cytoplasm. It carries out the reaction CMP + ATP = CDP + ADP. The catalysed reaction is dCMP + ATP = dCDP + ADP. The chain is Cytidylate kinase from Streptococcus agalactiae serotype III (strain NEM316).